A 66-amino-acid polypeptide reads, in one-letter code: Sodium/potassium-transporting ATPase subunit gamma (66 aa).

Residues 29–46 (GGLIFAGLAFIVGLLILL) traverse the membrane as a helical segment.

The protein belongs to the FXYD family. As to quaternary structure, regulatory subunit of the sodium/potassium-transporting ATPase which is composed of a catalytic alpha subunit, an auxiliary non-catalytic beta subunit and an additional regulatory subunit. As to expression, expressed in the distal convoluted tubule in the kidney. Found on basolateral membranes of nephron epithelial cells.

It localises to the membrane. Functionally, may be involved in forming the receptor site for cardiac glycoside binding or may modulate the transport function of the sodium ATPase. The protein is Sodium/potassium-transporting ATPase subunit gamma (FXYD2) of Homo sapiens (Human).